The sequence spans 79 residues: MISFFPNKPMYHVQPHISFITPERTMKTIPAFSRWAFAAVAGVFVFAMQVPKVKTTILQPIAFIGDHFKDKTPEEDKWL.

Topologically, residues 1–23 (MISFFPNKPMYHVQPHISFITPE) are mitochondrial matrix. The chain crosses the membrane as a helical span at residues 24 to 47 (RTMKTIPAFSRWAFAAVAGVFVFA). At 48–79 (MQVPKVKTTILQPIAFIGDHFKDKTPEEDKWL) the chain is on the mitochondrial intermembrane side.

This sequence belongs to the UQCR11/QCR10 family. Component of the ubiquinol-cytochrome c oxidoreductase (cytochrome b-c1 complex, complex III, CIII), a multisubunit enzyme composed of 3 respiratory subunits cytochrome b, cytochrome c1 and Rieske protein, 2 core protein subunits, and additional low-molecular weight protein subunits. The complex exists as an obligatory dimer and forms supercomplexes (SCs) in the inner mitochondrial membrane with cytochrome c oxidase (complex IV, CIV).

It localises to the mitochondrion inner membrane. In terms of biological role, component of the ubiquinol-cytochrome c oxidoreductase, a multisubunit transmembrane complex that is part of the mitochondrial electron transport chain which drives oxidative phosphorylation. The respiratory chain contains 3 multisubunit complexes succinate dehydrogenase (complex II, CII), ubiquinol-cytochrome c oxidoreductase (cytochrome b-c1 complex, complex III, CIII) and cytochrome c oxidase (complex IV, CIV), that cooperate to transfer electrons derived from NADH and succinate to molecular oxygen, creating an electrochemical gradient over the inner membrane that drives transmembrane transport and the ATP synthase. The cytochrome b-c1 complex catalyzes electron transfer from ubiquinol to cytochrome c, linking this redox reaction to translocation of protons across the mitochondrial inner membrane, with protons being carried across the membrane as hydrogens on the quinol. In the process called Q cycle, 2 protons are consumed from the matrix, 4 protons are released into the intermembrane space and 2 electrons are passed to cytochrome c. QCR10 has a role in CIII assembly and RIP1 stability. The chain is Cytochrome b-c1 complex subunit 10 from Schizosaccharomyces pombe (strain 972 / ATCC 24843) (Fission yeast).